The chain runs to 622 residues: MDSTTKLAIGAIGIVFGDIGTSPLYAFRETFVGPNPLPIDYNHVLGVVSLIFWSMTLIVAIQYVTILMRADNKGQGGSLALVALISRSVRNTNYGWLVVLLGVFATSLFYGDSMITPAISVLSAVEGLVVVDPELQGFVIPIALVLLVGLFVLQKRGTAKVGALFAPVMIVYFTVIATLGLISIVQHPEILYALNPYYAVLFFINDGFLAFLALGSVVLAVTGSEALYSDMGHFGRGPMKLSWFGFVMPCLLLNYFGQGAMIVSLSGPEAQEAIQAPFFLLAPEMLRLPLVILATFATFIASQAVISGAFSITHQAIQLGFVPRLSVRHTSDAHSGQIYIPVINWALMVAVILLVLTFQNSSNLASAYGIAVTGAVTIDTLLMAVLLVGVWKWKWYYAAPVVIVFLIIDGAYFAANLTKVPDGGWFPLVVGLIVFTLLTTWARGRKLMRERMSEVALPIEIFAKSAHNSATRVPGTAIFMASSTAGVPSALLHNIKHNKVLHERVVILTVEISDIPYVDPAKRCEYSEIGQGIYRAILHYGFMEETNVPEGLKSMQQCGGEFDMMQTSFFLSRQTLLPSDKPGMPIWREKIFAWMLRNAATAMEFFGLPTNRVVELGSQVRI.

12 helical membrane passes run 7–27 (LAIG…LYAF), 44–64 (VLGV…IQYV), 95–115 (GWLV…DSMI), 133–153 (PELQ…LFVL), 165–185 (FAPV…ISIV), 199–219 (AVLF…SVVL), 243–263 (WFGF…AMIV), 290–310 (LVIL…SGAF), 338–358 (IYIP…VLTF), 370–390 (IAVT…LVGV), 395–415 (WYYA…YFAA), and 422–442 (DGGW…TTWA).

It belongs to the HAK/KUP transporter (TC 2.A.72) family.

It localises to the cell inner membrane. The enzyme catalyses K(+)(in) + H(+)(in) = K(+)(out) + H(+)(out). In terms of biological role, transport of potassium into the cell. Likely operates as a K(+):H(+) symporter. The sequence is that of Probable potassium transport system protein Kup from Erythrobacter litoralis (strain HTCC2594).